Here is a 117-residue protein sequence, read N- to C-terminus: Protein Turandot F (117 aa).

The first 22 residues, 1–22 (MKTVILFSFLLVLLGYLGAGHA), serve as a signal peptide directing secretion.

The protein belongs to the Turandot family.

It localises to the secreted. Its function is as follows. A humoral factor that may play a role in stress tolerance. The protein is Protein Turandot F of Drosophila sechellia (Fruit fly).